The chain runs to 130 residues: U-scoloptoxin(17)-Er1a (130 aa).

The first 18 residues, 1 to 18 (MKLLVFALFLQVVQLSLA), serve as a signal peptide directing secretion.

Belongs to the scoloptoxin-17 family. Contains 4 disulfide bonds. In terms of tissue distribution, expressed by the venom gland.

It localises to the secreted. The sequence is that of U-scoloptoxin(17)-Er1a from Ethmostigmus rubripes (Giant centipede).